Reading from the N-terminus, the 190-residue chain is Peptidyl-tRNA hydrolase (190 aa).

Tyr14 contacts tRNA. Catalysis depends on His19, which acts as the Proton acceptor. Tyr64 and Asn66 together coordinate tRNA.

The protein belongs to the PTH family. Monomer.

The protein localises to the cytoplasm. The catalysed reaction is an N-acyl-L-alpha-aminoacyl-tRNA + H2O = an N-acyl-L-amino acid + a tRNA + H(+). Its function is as follows. Hydrolyzes ribosome-free peptidyl-tRNAs (with 1 or more amino acids incorporated), which drop off the ribosome during protein synthesis, or as a result of ribosome stalling. In terms of biological role, catalyzes the release of premature peptidyl moieties from peptidyl-tRNA molecules trapped in stalled 50S ribosomal subunits, and thus maintains levels of free tRNAs and 50S ribosomes. The chain is Peptidyl-tRNA hydrolase from Rhodopirellula baltica (strain DSM 10527 / NCIMB 13988 / SH1).